A 662-amino-acid chain; its full sequence is UvrABC system protein B (662 aa).

One can recognise a Helicase ATP-binding domain in the interval 25–182 (KGIEKREKFQ…KKLVEIQYER (158 aa)). Residue 38–45 (GVTGSGKT) participates in ATP binding. A Beta-hairpin motif is present at residues 91–114 (YYDYYQPEAYVAQSDTYIEKDASI). The 167-residue stretch at 429 to 595 (QIDDLYTSIQ…TIIKDIREVI (167 aa)) folds into the Helicase C-terminal domain. One can recognise a UVR domain in the interval 622 to 657 (DKLIEKYEEEMKEAAQNLQFEKAAHLRDVIYKLKKD).

Belongs to the UvrB family. Forms a heterotetramer with UvrA during the search for lesions. Interacts with UvrC in an incision complex.

Its subcellular location is the cytoplasm. The UvrABC repair system catalyzes the recognition and processing of DNA lesions. A damage recognition complex composed of 2 UvrA and 2 UvrB subunits scans DNA for abnormalities. Upon binding of the UvrA(2)B(2) complex to a putative damaged site, the DNA wraps around one UvrB monomer. DNA wrap is dependent on ATP binding by UvrB and probably causes local melting of the DNA helix, facilitating insertion of UvrB beta-hairpin between the DNA strands. Then UvrB probes one DNA strand for the presence of a lesion. If a lesion is found the UvrA subunits dissociate and the UvrB-DNA preincision complex is formed. This complex is subsequently bound by UvrC and the second UvrB is released. If no lesion is found, the DNA wraps around the other UvrB subunit that will check the other stand for damage. This chain is UvrABC system protein B, found in Clostridium botulinum (strain Kyoto / Type A2).